We begin with the raw amino-acid sequence, 546 residues long: CTP synthase (546 aa).

The amidoligase domain stretch occupies residues 1 to 264 (MRYIVVTGGV…TKYIMKAMRL (264 aa)). Position 12 (Ser12) interacts with CTP. Ser12 contributes to the UTP binding site. ATP-binding positions include 13–18 (GLGKGI) and Asp70. The Mg(2+) site is built by Asp70 and Glu140. CTP contacts are provided by residues 147–149 (DIE), 185–190 (KTKPTQ), and Lys221. UTP is bound by residues 185 to 190 (KTKPTQ) and Lys221. In terms of domain architecture, Glutamine amidotransferase type-1 spans 298 to 534 (GSQCTDPMKD…VEAMKAQRLR (237 aa)). L-glutamine is bound at residue Gly357. The active-site Nucleophile; for glutamine hydrolysis is Cys384. Residues 385–388 (FGMQ), Glu408, and Arg464 contribute to the L-glutamine site. Catalysis depends on residues His507 and Glu509.

It belongs to the CTP synthase family. Homotetramer.

It catalyses the reaction UTP + L-glutamine + ATP + H2O = CTP + L-glutamate + ADP + phosphate + 2 H(+). The catalysed reaction is L-glutamine + H2O = L-glutamate + NH4(+). It carries out the reaction UTP + NH4(+) + ATP = CTP + ADP + phosphate + 2 H(+). It participates in pyrimidine metabolism; CTP biosynthesis via de novo pathway; CTP from UDP: step 2/2. Allosterically activated by GTP, when glutamine is the substrate; GTP has no effect on the reaction when ammonia is the substrate. The allosteric effector GTP functions by stabilizing the protein conformation that binds the tetrahedral intermediate(s) formed during glutamine hydrolysis. Inhibited by the product CTP, via allosteric rather than competitive inhibition. Functionally, catalyzes the ATP-dependent amination of UTP to CTP with either L-glutamine or ammonia as the source of nitrogen. Regulates intracellular CTP levels through interactions with the four ribonucleotide triphosphates. This Methanothrix thermoacetophila (strain DSM 6194 / JCM 14653 / NBRC 101360 / PT) (Methanosaeta thermophila) protein is CTP synthase.